The following is a 592-amino-acid chain: Syntaxin-binding protein 3 (592 aa).

Positions 1–255 are mediates interaction with DOC2B; that stretch reads MAPPVSERGL…STVLHELTFQ (255 aa).

It belongs to the STXBP/unc-18/SEC1 family. As to quaternary structure, interacts with STX4. Interacts with DOC2B; the interaction is direct, occurs at the cell membrane, excludes interaction with STX4 and regulates glucose-stimulated insulin secretion. Phosphorylated by PKC in platelets in response to thrombin stimulation; phosphorylation inhibits binding to STX4. In terms of tissue distribution, ubiquitously expressed in all tissues tested.

It is found in the cytoplasm. The protein resides in the cytosol. Its subcellular location is the cell membrane. Together with STX4 and VAMP2, may play a role in insulin-dependent movement of GLUT4 and in docking/fusion of intracellular GLUT4-containing vesicles with the cell surface in adipocytes. This is Syntaxin-binding protein 3 (Stxbp3) from Mus musculus (Mouse).